Here is an 80-residue protein sequence, read N- to C-terminus: Cytochrome c oxidase subunit 7B, mitochondrial (80 aa).

The N-terminal 24 residues, Met-1 to Gln-24, are a transit peptide targeting the mitochondrion. Residues Ser-25–Asp-32 are Mitochondrial matrix-facing. A helical transmembrane segment spans residues Phe-33–Gln-59. Residues Val-60–Gln-80 lie on the Mitochondrial intermembrane side of the membrane.

This sequence belongs to the cytochrome c oxidase VIIb family. As to quaternary structure, component of the cytochrome c oxidase (complex IV, CIV), a multisubunit enzyme composed of 14 subunits. The complex is composed of a catalytic core of 3 subunits MT-CO1, MT-CO2 and MT-CO3, encoded in the mitochondrial DNA, and 11 supernumerary subunits COX4I1 (or COX4I2), COX5A, COX5B, COX6A1 (or COX6A2), COX6B1 (or COX6B2), COX6C, COX7A2 (or COX7A1), COX7B, COX7C, COX8A and NDUFA4, which are encoded in the nuclear genome. The complex exists as a monomer or a dimer and forms supercomplexes (SCs) in the inner mitochondrial membrane with NADH-ubiquinone oxidoreductase (complex I, CI) and ubiquinol-cytochrome c oxidoreductase (cytochrome b-c1 complex, complex III, CIII), resulting in different assemblies (supercomplex SCI(1)III(2)IV(1) and megacomplex MCI(2)III(2)IV(2)).

The protein localises to the mitochondrion inner membrane. The protein operates within energy metabolism; oxidative phosphorylation. Functionally, component of the cytochrome c oxidase, the last enzyme in the mitochondrial electron transport chain which drives oxidative phosphorylation. The respiratory chain contains 3 multisubunit complexes succinate dehydrogenase (complex II, CII), ubiquinol-cytochrome c oxidoreductase (cytochrome b-c1 complex, complex III, CIII) and cytochrome c oxidase (complex IV, CIV), that cooperate to transfer electrons derived from NADH and succinate to molecular oxygen, creating an electrochemical gradient over the inner membrane that drives transmembrane transport and the ATP synthase. Cytochrome c oxidase is the component of the respiratory chain that catalyzes the reduction of oxygen to water. Electrons originating from reduced cytochrome c in the intermembrane space (IMS) are transferred via the dinuclear copper A center (CU(A)) of subunit 2 and heme A of subunit 1 to the active site in subunit 1, a binuclear center (BNC) formed by heme A3 and copper B (CU(B)). The BNC reduces molecular oxygen to 2 water molecules using 4 electrons from cytochrome c in the IMS and 4 protons from the mitochondrial matrix. Plays a role in proper central nervous system (CNS) development in vertebrates. The polypeptide is Cytochrome c oxidase subunit 7B, mitochondrial (COX7B) (Homo sapiens (Human)).